A 784-amino-acid chain; its full sequence is Toll-like receptor 2 (784 aa).

Positions 1 to 20 are cleaved as a signal peptide; sequence MPRALWTAWVWAVIILSMEG. Topologically, residues 21-587 are extracellular; the sequence is ASHQASSLSC…ARLSLSECHR (567 aa). The cysteines at positions 30 and 36 are disulfide-linked. 19 LRR repeats span residues 54–77, 78–101, 102–125, 126–150, 151–175, 176–199, 200–223, 224–250, 251–278, 279–308, 309–337, 338–361, 362–388, 389–414, 415–437, 438–457, 458–478, 479–500, and 501–524; these read VKSLDLSNNEITYVSNRDLQRCVN, LKTLRLGANEIHTVEEDSFFHLRN, LEYLDLSYNRLSNLSSSWFRSLYA, LKFLNLLGNVYKTLGETSLFSHLPN, LRTLKVGNSNSFTEIHEKDFTGLIF, LEELEISAQNLQIYVPKSLKSIQN, ISHLILHLKQPVLLVDILVDIVSS, LDCLELRDTNLHTFHFSEASISEMNTS, VKKLIFRNVQFTDESFVEVVKLFNYVSG, ILEVEFDDCTHDGIGDFRALSLDRIRHLGN, VETLTIRKLHIPQFFLFHDLSSIYPLTGK, VKRVTIESSKVFLVPCLLSQHLKS, LEYLDLSENLMSEETLKNSACKDAWPF, LQTLVLRQNRLKSLEKTGELLLTLEN, LNNLDISKNNFLSMPETCRWPGK, MKQLNLSSTRVHSLTQCLPQ, TLEILDVSNNNLDSFSLILPQ, LKELYISRNKLKTLPDASFLPV, and LSVMRISRNIINTFSKEQLDSFQQ. An N-linked (GlcNAc...) asparagine glycan is attached at Asn114. N-linked (GlcNAc...) asparagine glycosylation occurs at Asn199. Asn248 carries an N-linked (GlcNAc...) asparagine glycan. Cysteines 353 and 382 form a disulfide. Cys432 and Cys454 form a disulfide bridge. Asn442 carries N-linked (GlcNAc...) asparagine glycosylation. Residues 525–579 form the LRRCT domain; it reads LKTLEAGGNNFICSCDFLSFTQGQQALGRVLVDWPAEYRCDSPSHVRGQRVQDAR. Residues 588-608 traverse the membrane as a helical segment; the sequence is AAVVSAACCALFLLLLLTGVL. Topologically, residues 609 to 784 are cytoplasmic; it reads CHRFHGLWYM…WLNLRAAIRS (176 aa). A TIR domain is found at 639-782; sequence ICYDAFVSYS…GFWLNLRAAI (144 aa). A Glycyl lysine isopeptide (Lys-Gly) (interchain with G-Cter in ubiquitin) cross-link involves residue Lys754. The ATG16L1-binding motif motif lies at 761-778; that stretch reads YLEWPVDETQQEGFWLNL.

It belongs to the Toll-like receptor family. In terms of assembly, interacts with LY96, TLR1 and TLR6 (via extracellular domain). TLR2 seems to exist in heterodimers with either TLR1 or TLR6 before stimulation by the ligand. The heterodimers form bigger oligomers in response to their corresponding ligands as well as further heterotypic associations with other receptors such as CD14 and/or CD36. Binds MYD88 (via TIR domain). Interacts with TICAM1. Interacts with CNPY3. Interacts with ATG16L1. Interacts with PPP1R11. Interacts with TICAM2. Interacts with TIRAP. Post-translationally, ubiquitinated at Lys-754 by PPP1R11, leading to its degradation. Deubiquitinated by USP2. In terms of processing, glycosylation of Asn-442 is critical for secretion of the N-terminal ectodomain of TLR2.

The protein resides in the membrane. Its subcellular location is the cytoplasmic vesicle. It localises to the phagosome membrane. The protein localises to the membrane raft. Its function is as follows. Cooperates with LY96 to mediate the innate immune response to bacterial lipoproteins and other microbial cell wall components. Cooperates with TLR1 or TLR6 to mediate the innate immune response to bacterial lipoproteins or lipopeptides. Acts via MYD88 and TRAF6, leading to NF-kappa-B activation, cytokine secretion and the inflammatory response. May also promote apoptosis in response to lipoproteins. Forms activation clusters composed of several receptors depending on the ligand, these clusters trigger signaling from the cell surface and subsequently are targeted to the Golgi in a lipid-raft dependent pathway. Forms the cluster TLR2:TLR6:CD14:CD36 in response to diacylated lipopeptides and TLR2:TLR1:CD14 in response to triacylated lipopeptides. The sequence is that of Toll-like receptor 2 (TLR2) from Bubalus bubalis (Domestic water buffalo).